The sequence spans 732 residues: Polyadenylate-binding protein, cytoplasmic and nuclear (732 aa).

The segment covering 1–19 (MSAETSTTPAPAENTNGTP) has biased composition (polar residues). The interval 1–26 (MSAETSTTPAPAENTNGTPDNAPAPE) is disordered. 4 RRM domains span residues 42-120 (ASLY…WSQR), 130-207 (GNVF…HHIS), 223-300 (TNIY…RAQK), and 326-454 (VNLY…LAQR). 2 disordered regions span residues 357 to 413 (VMRD…KKPL) and 706 to 732 (MKNK…ENKA). Over residues 371-412 (SETKESANKENEKAAEGEKEPAAEEKEKEEKKEAEQKPEKKP) the composition is skewed to basic and acidic residues. The region spanning 630-707 (VGVLTAQALS…ALSVYDEYMK (78 aa)) is the PABC domain.

The protein belongs to the polyadenylate-binding protein type-1 family.

It localises to the cytoplasm. The protein resides in the nucleus. Binds the poly(A) tail of mRNA. Appears to be an important mediator of the multiple roles of the poly(A) tail in mRNA biogenesis, stability and translation. In the nucleus, involved in both mRNA cleavage and polyadenylation. Is also required for efficient mRNA export to the cytoplasm. Acts in concert with a poly(A)-specific nuclease (PAN) to affect poly(A) tail shortening, which may occur concomitantly with either nucleocytoplasmic mRNA transport or translational initiation. In the cytoplasm, stimulates translation initiation and regulates mRNA decay through translation termination-coupled poly(A) shortening, probably mediated by PAN. The chain is Polyadenylate-binding protein, cytoplasmic and nuclear (pab1) from Emericella nidulans (strain FGSC A4 / ATCC 38163 / CBS 112.46 / NRRL 194 / M139) (Aspergillus nidulans).